Here is a 323-residue protein sequence, read N- to C-terminus: MKQYLDLVRDVIDNGTLQGNRTGIRTISLPGAMLRFDLQKGFPAITTRKLAFKSAIGEMVGFLRGVKNAGEFRELGCKVWDQNANENAQWLANPFRQGHDDLGEIYGVQWRQWPGYKRIPLSNPAAIEMAEQAGFRRIAQDEEDGVAFVILYKAIDQVRQCLDTIANDPGSRRILFHGWNCAQLDEMALPPCHLLYQFHPNVETREISLTLYIRSNDLGLGTPFNLTEGAALLSLFGRLTGYTPRWFTYFIGDAHVYENHLDMLNEQLKREPLEAPKLVISDRVPAFAETGKYEPEWLEKIEPSDFWLEGYEHHAPMTAPMAV.

DUMP-binding positions include R21 and 172–173 (RR). Catalysis depends on C192, which acts as the Nucleophile. Residues 214–217 (RSND), N225, and 255–257 (HVY) contribute to the dUMP site. Position 217 (D217) interacts with (6R)-5,10-methylene-5,6,7,8-tetrahydrofolate. Residue A322 coordinates (6R)-5,10-methylene-5,6,7,8-tetrahydrofolate.

It belongs to the thymidylate synthase family. Bacterial-type ThyA subfamily. In terms of assembly, homodimer.

It localises to the cytoplasm. It catalyses the reaction dUMP + (6R)-5,10-methylene-5,6,7,8-tetrahydrofolate = 7,8-dihydrofolate + dTMP. It participates in pyrimidine metabolism; dTTP biosynthesis. Catalyzes the reductive methylation of 2'-deoxyuridine-5'-monophosphate (dUMP) to 2'-deoxythymidine-5'-monophosphate (dTMP) while utilizing 5,10-methylenetetrahydrofolate (mTHF) as the methyl donor and reductant in the reaction, yielding dihydrofolate (DHF) as a by-product. This enzymatic reaction provides an intracellular de novo source of dTMP, an essential precursor for DNA biosynthesis. In Pseudomonas putida (strain ATCC 47054 / DSM 6125 / CFBP 8728 / NCIMB 11950 / KT2440), this protein is Thymidylate synthase.